The chain runs to 3601 residues: Protein SPIRRIG (3601 aa).

Disordered regions lie at residues 17–50 (AQSSDSDPFPVDLTAPPSSSSSSSSPSFTYPSSS), 398–426 (SSNHDSGSDDPEVFHDGENTNSTENADFS), 449–476 (PAEPSVGRASRSSQTKPTGHSRSRTSSV), 638–657 (QYSGVSSHSDRKPSSGSFRK), 1954–1993 (HINDADDSGSQGSLPHDQDQSTKTSISVGSFPQGQVSLGS), 2009–2049 (ENIL…DFQD), and 2715–2747 (TTHVKSETGSPRHSSSAKMDETNGREEKSEKEL). Residues 32–50 (PPSSSSSSSSPSFTYPSSS) are compositionally biased toward low complexity. Composition is skewed to polar residues over residues 416-426 (NTNSTENADFS) and 458-476 (SRSSQTKPTGHSRSRTSSV). Residues 1974 to 1991 (STKTSISVGSFPQGQVSL) show a composition bias toward polar residues. Residues 2027–2048 (EDVKKQDDHHVGPSASSERDFQ) are compositionally biased toward basic and acidic residues. The span at 2715–2731 (TTHVKSETGSPRHSSSA) shows a compositional bias: polar residues. Residues 2732–2747 (KMDETNGREEKSEKEL) are compositionally biased toward basic and acidic residues. Residues 2760–2927 (EHLEKIRFRY…EREEVFKNLV (168 aa)) form the BEACH-type PH domain. The BEACH domain maps to 2952 to 3244 (GGRLFKLMAK…QLFPKAHVKR (293 aa)). WD repeat units lie at residues 3328–3367 (HESNQIQCAGVSHDGRIVVTGAEDGLVCVWRVSKDGPRGS), 3378–3417 (AHTAKVTCLRVSQPYMMIASGSDDCTVIIWDLSSLSFVRQ), 3464–3507 (PSDS…DPVS), and 3540–3579 (FHKQPVTALHLTSDLKQLLSGDSAGQLLSWTVPDETLRAS).

Interacts with DCP1. Expressed in flowers, leaves, stems, hypocotyls and roots.

It is found in the cytoplasm. The protein localises to the P-body. Involved in cell morphogenesis. May have a function in membrane fusion or membrane composition. Required for salt stress tolerance. Regulates the salt stress-dependent post-transcriptional stabilization, cytoplasmic agglomeration, and localization to P-bodies of a subset of salt stress-regulated mRNAs. This is Protein SPIRRIG from Arabidopsis thaliana (Mouse-ear cress).